The following is a 272-amino-acid chain: Flagellin (272 aa).

This sequence belongs to the bacterial flagellin family.

It is found in the secreted. Its subcellular location is the bacterial flagellum. Its function is as follows. Flagellin is the subunit protein which polymerizes to form the filaments of bacterial flagella. The protein is Flagellin (hag) of Halalkalibacterium halodurans (strain ATCC BAA-125 / DSM 18197 / FERM 7344 / JCM 9153 / C-125) (Bacillus halodurans).